The primary structure comprises 749 residues: Probable galactinol--sucrose galactosyltransferase 6 (749 aa).

The protein belongs to the glycosyl hydrolases 36 family.

It catalyses the reaction alpha-D-galactosyl-(1-&gt;3)-1D-myo-inositol + sucrose = raffinose + myo-inositol. Its function is as follows. Transglycosidase operating by a ping-pong reaction mechanism. Involved in the synthesis of raffinose, a major soluble carbohydrate in seeds, roots and tubers. The chain is Probable galactinol--sucrose galactosyltransferase 6 (RFS6) from Arabidopsis thaliana (Mouse-ear cress).